The chain runs to 444 residues: Glutamyl-tRNA(Gln) amidotransferase subunit D (444 aa).

In terms of domain architecture, Asparaginase/glutaminase spans 92–424 (SEIKIISTGG…EKIQNLMITN (333 aa)). Residues threonine 102, threonine 178, aspartate 179, and lysine 257 contribute to the active site.

The protein belongs to the asparaginase 1 family. GatD subfamily. In terms of assembly, heterodimer of GatD and GatE.

The catalysed reaction is L-glutamyl-tRNA(Gln) + L-glutamine + ATP + H2O = L-glutaminyl-tRNA(Gln) + L-glutamate + ADP + phosphate + H(+). Functionally, allows the formation of correctly charged Gln-tRNA(Gln) through the transamidation of misacylated Glu-tRNA(Gln) in organisms which lack glutaminyl-tRNA synthetase. The reaction takes place in the presence of glutamine and ATP through an activated gamma-phospho-Glu-tRNA(Gln). The GatDE system is specific for glutamate and does not act on aspartate. The sequence is that of Glutamyl-tRNA(Gln) amidotransferase subunit D from Saccharolobus solfataricus (strain ATCC 35092 / DSM 1617 / JCM 11322 / P2) (Sulfolobus solfataricus).